We begin with the raw amino-acid sequence, 432 residues long: Adenylosuccinate synthetase (432 aa).

Residues 12–18 (GDEGKGK) and 40–42 (GHT) each bind GTP. Asp13 acts as the Proton acceptor in catalysis. Mg(2+) is bound by residues Asp13 and Gly40. Residues 13–16 (DEGK), 38–41 (NAGH), Thr132, Arg146, Gln226, Thr241, and Arg305 each bind IMP. His41 functions as the Proton donor in the catalytic mechanism. A substrate-binding site is contributed by 301-307 (VVTGRKR). Residues Arg307, 333–335 (KLD), and 415–417 (STS) contribute to the GTP site.

This sequence belongs to the adenylosuccinate synthetase family. As to quaternary structure, homodimer. Requires Mg(2+) as cofactor.

Its subcellular location is the cytoplasm. It carries out the reaction IMP + L-aspartate + GTP = N(6)-(1,2-dicarboxyethyl)-AMP + GDP + phosphate + 2 H(+). Its pathway is purine metabolism; AMP biosynthesis via de novo pathway; AMP from IMP: step 1/2. Its function is as follows. Plays an important role in the de novo pathway of purine nucleotide biosynthesis. Catalyzes the first committed step in the biosynthesis of AMP from IMP. This chain is Adenylosuccinate synthetase, found in Rhizobium johnstonii (strain DSM 114642 / LMG 32736 / 3841) (Rhizobium leguminosarum bv. viciae).